Reading from the N-terminus, the 347-residue chain is MGSADDRRFEVLRAIVADFVATKEPIGSKTLVERHNLGVSSATVRNDMAVLEAEGYITQPHTSSGRVPTEKGYREFVDRLDDVKPLSSAERRAILKFLETGVDLDDVLRRAVRLLAQLTRQVAIVQYPTLSTSSVRHLEVVALTPARLLLVVITDTGRVDQRIVELGDAIDEHELATLRDLLGQALEGKRLSAASVAVSDLATHLSGSPGMSHRLADAVGRSATVLVETLVEHTEERLLLGGTANLTRNTADFGGSLRSVLEALEEQVVVLRLLAAQQEAGKVTVRIGHETEAEQMAGTSVVTTAYGSSGKVYGGMGVVGPTRMDYPGTIANVAAVALYIGEVLGTR.

Belongs to the HrcA family.

Its function is as follows. Negative regulator of class I heat shock genes (grpE-dnaK-dnaJ and groELS operons). Prevents heat-shock induction of these operons. The chain is Heat-inducible transcription repressor HrcA from Mycobacterium sp. (strain JLS).